The primary structure comprises 170 residues: Calcineurin subunit B type 1 (170 aa).

The N-myristoyl glycine moiety is linked to residue glycine 2. EF-hand domains follow at residues 18 to 46 (DEIK…FMSL), 50 to 85 (QQNP…FSVK), 87 to 122 (DKEQ…MVGN), and 128 to 163 (QLQQ…LDIH). Residues aspartate 31, aspartate 33, serine 35, serine 37, glutamate 42, aspartate 63, aspartate 65, asparagine 67, glutamate 69, glutamate 74, aspartate 100, aspartate 102, aspartate 104, tyrosine 106, and glutamate 111 each coordinate Ca(2+). Tyrosine 106 bears the Phosphotyrosine mark. A calcineurin A binding region spans residues 131 to 136 (QIVDKT). Positions 141, 143, 145, 147, and 152 each coordinate Ca(2+).

The protein belongs to the calcineurin regulatory subunit family. In terms of assembly, forms a complex composed of a calmodulin-dependent catalytic subunit (also known as calcineurin A) and a regulatory Ca(2+)-binding subunit (also known as calcineurin B). There are three catalytic subunits, each encoded by a separate gene (PPP3CA, PPP3CB, and PPP3CC) and two regulatory subunits which are also encoded by separate genes (PPP3R1 and PPP3R2). The interaction between the 2 subunits is Ca(2+)-independent. Interacts with catalytic subunit PPP3CA/calcineurin A. Interacts with catalytic subunit PPP3CB/calcineurin A. Interacts with CIB1 (via C-terminal region); the interaction increases upon cardiomyocyte hypertrophy. Interacts with RCAN1. Interacts with SPATA33 (via PQIIIT motif).

Its subcellular location is the cytoplasm. The protein localises to the cytosol. It localises to the cell membrane. The protein resides in the sarcolemma. Regulatory subunit of calcineurin, a calcium-dependent, calmodulin stimulated protein phosphatase. Confers calcium sensitivity. In Bos taurus (Bovine), this protein is Calcineurin subunit B type 1 (PPP3R1).